The chain runs to 158 residues: C-type lection lectoxin-Enh3 (158 aa).

Positions 1 to 23 are cleaved as a signal peptide; sequence MGQFTVVSLGLLAMFLSLSGAKG. 3 disulfide bridges follow: C26–C37, C54–C154, and C129–C146. A C-type lectin domain is found at 33–155; it reads RNGVCNKLFP…CASLHPFICQ (123 aa). Positions 119–121 match the Mannose-binding motif; that stretch reads EPN. E127, N142, and D143 together coordinate Ca(2+).

Belongs to the true venom lectin family. As to expression, expressed by the venom gland.

The protein resides in the secreted. Its function is as follows. Mannose-binding lectin which recognizes specific carbohydrate structures and agglutinates a variety of animal cells by binding to cell-surface glycoproteins and glycolipids. May be a calcium-dependent lectin. This Pseudoferania polylepis (Macleay's water snake) protein is C-type lection lectoxin-Enh3.